A 172-amino-acid polypeptide reads, in one-letter code: Pollen-specific protein-like At4g18596 (172 aa).

An N-terminal signal peptide occupies residues 1–27 (MASKAIFFFFVSAVCLSSLAGVAIADA). Cystine bridges form between C41–C112, C44–C157, and C65–C100. A glycan (N-linked (GlcNAc...) asparagine) is linked at N70.

The protein belongs to the Ole e I family.

It localises to the secreted. In Arabidopsis thaliana (Mouse-ear cress), this protein is Pollen-specific protein-like At4g18596.